Reading from the N-terminus, the 459-residue chain is Endoglucanase CelA (459 aa).

The signal sequence occupies residues 1 to 27 (MKRLLALLATGVSIVGLTALAGPPAQA). The region spanning 28–134 (ATGCKAEYTI…TLNGATCSGS (107 aa)) is the CBM2 domain. C31 and C131 are oxidised to a cystine. Positions 129 to 151 (ATCSGSVTDPPTDPPTDPPATGT) are disordered. The segment at 136-147 (TDPPTDPPTDPP) is linker ('hinge') (Pro-Thr box). Residues 148–357 (ATGTPAAVNG…YAFHFYAASH (210 aa)) form a catalytic region. E286 functions as the Proton donor in the catalytic mechanism. E378 (nucleophile) is an active-site residue.

It belongs to the glycosyl hydrolase 5 (cellulase A) family. The linker region (also termed 'hinge') may be a potential site for proteolysis.

The catalysed reaction is Endohydrolysis of (1-&gt;4)-beta-D-glucosidic linkages in cellulose, lichenin and cereal beta-D-glucans.. The sequence is that of Endoglucanase CelA (celA) from Streptomyces lividans.